The following is a 197-amino-acid chain: Small ribosomal subunit protein uS4c (197 aa).

Residues 82 to 143 (MRLDNILFRL…KQRSKALIQN (62 aa)) form the S4 RNA-binding domain.

The protein belongs to the universal ribosomal protein uS4 family. As to quaternary structure, part of the 30S ribosomal subunit. Contacts protein S5. The interaction surface between S4 and S5 is involved in control of translational fidelity.

It localises to the plastid. The protein localises to the chloroplast. Functionally, one of the primary rRNA binding proteins, it binds directly to 16S rRNA where it nucleates assembly of the body of the 30S subunit. In terms of biological role, with S5 and S12 plays an important role in translational accuracy. This chain is Small ribosomal subunit protein uS4c (rps4), found in Gladiolus papilio (Goldblotch gladiolus).